A 77-amino-acid polypeptide reads, in one-letter code: UPF0349 protein lwe2340 (77 aa).

Belongs to the UPF0349 family.

The sequence is that of UPF0349 protein lwe2340 from Listeria welshimeri serovar 6b (strain ATCC 35897 / DSM 20650 / CCUG 15529 / CIP 8149 / NCTC 11857 / SLCC 5334 / V8).